The sequence spans 228 residues: ATP-dependent dethiobiotin synthetase BioD (228 aa).

13–18 lines the ATP pocket; sequence DIGKTF. Residue T17 participates in Mg(2+) binding. K38 is an active-site residue. Residue S42 coordinates substrate. ATP is bound by residues D55, 116–119, 179–180, and 208–210; these read EGSG, NK, and PKI. Mg(2+) contacts are provided by D55 and E116.

The protein belongs to the dethiobiotin synthetase family. In terms of assembly, homodimer. Mg(2+) serves as cofactor.

It localises to the cytoplasm. It carries out the reaction (7R,8S)-7,8-diammoniononanoate + CO2 + ATP = (4R,5S)-dethiobiotin + ADP + phosphate + 3 H(+). Its pathway is cofactor biosynthesis; biotin biosynthesis; biotin from 7,8-diaminononanoate: step 1/2. In terms of biological role, catalyzes a mechanistically unusual reaction, the ATP-dependent insertion of CO2 between the N7 and N8 nitrogen atoms of 7,8-diaminopelargonic acid (DAPA, also called 7,8-diammoniononanoate) to form a ureido ring. The polypeptide is ATP-dependent dethiobiotin synthetase BioD (Clostridium perfringens (strain 13 / Type A)).